We begin with the raw amino-acid sequence, 374 residues long: Chaperone protein DnaJ (374 aa).

The 66-residue stretch at 5–70 (DYYEVLGVER…SKRAAYDQYG (66 aa)) folds into the J domain. Residues 133–211 (GTTVNIRVPT…CHGEGRVEEY (79 aa)) form a CR-type zinc finger. Zn(2+)-binding residues include cysteine 146, cysteine 149, cysteine 163, cysteine 166, cysteine 185, cysteine 188, cysteine 199, and cysteine 202. 4 CXXCXGXG motif repeats span residues 146–153 (CKPCDGSG), 163–170 (CPTCGGIG), 185–192 (CPRCHGQG), and 199–206 (CDSCHGEG).

Belongs to the DnaJ family. Homodimer. Zn(2+) is required as a cofactor.

The protein localises to the cytoplasm. Functionally, participates actively in the response to hyperosmotic and heat shock by preventing the aggregation of stress-denatured proteins and by disaggregating proteins, also in an autonomous, DnaK-independent fashion. Unfolded proteins bind initially to DnaJ; upon interaction with the DnaJ-bound protein, DnaK hydrolyzes its bound ATP, resulting in the formation of a stable complex. GrpE releases ADP from DnaK; ATP binding to DnaK triggers the release of the substrate protein, thus completing the reaction cycle. Several rounds of ATP-dependent interactions between DnaJ, DnaK and GrpE are required for fully efficient folding. Also involved, together with DnaK and GrpE, in the DNA replication of plasmids through activation of initiation proteins. In Pseudomonas fluorescens (strain ATCC BAA-477 / NRRL B-23932 / Pf-5), this protein is Chaperone protein DnaJ.